The chain runs to 506 residues: Histidine--tRNA ligase, mitochondrial (506 aa).

The N-terminal 33 residues, 1-33, are a transit peptide targeting the mitochondrion; that stretch reads MPLLGLLPRRAWASLLSQLLRPPCASCTGAVRC. S67 carries the phosphoserine modification. Residues 131 to 133, R158, Q174, D178, R327, and 331 to 332 contribute to the L-histidine site; these read DLT and YY. An N6-acetyllysine modification is found at K444.

This sequence belongs to the class-II aminoacyl-tRNA synthetase family. In terms of assembly, homodimer. A high level expression is seen in the heart, kidney and skeletal muscle while a lower level expression is seen in the brain and liver.

It is found in the mitochondrion. The catalysed reaction is tRNA(His) + L-histidine + ATP = L-histidyl-tRNA(His) + AMP + diphosphate + H(+). Functionally, mitochondrial aminoacyl-tRNA synthetase that catalyzes the ATP-dependent ligation of histidine to the 3'-end of its cognate tRNA, via the formation of an aminoacyl-adenylate intermediate (His-AMP). The sequence is that of Histidine--tRNA ligase, mitochondrial (HARS2) from Homo sapiens (Human).